Consider the following 177-residue polypeptide: Disulfide bond formation protein B (177 aa).

Residues M1–V14 are Cytoplasmic-facing. The chain crosses the membrane as a helical span at residues L15 to Y31. The Periplasmic portion of the chain corresponds to L32–Y49. An intrachain disulfide couples C41 to C44. Residues A50–R64 form a helical membrane-spanning segment. Over S65–W70 the chain is Cytoplasmic. The helical transmembrane segment at L71–A89 threads the bilayer. Topologically, residues R90–N145 are periplasmic. A disulfide bridge connects residues C104 and C131. The helical transmembrane segment at W146 to R164 threads the bilayer. Topologically, residues G165 to V177 are cytoplasmic.

It belongs to the DsbB family.

The protein localises to the cell inner membrane. Functionally, required for disulfide bond formation in some periplasmic proteins. Acts by oxidizing the DsbA protein. This Verminephrobacter eiseniae (strain EF01-2) protein is Disulfide bond formation protein B.